The sequence spans 591 residues: Max-binding protein MNT (591 aa).

N-acetylserine is present on serine 2. 2 disordered regions span residues 17-122 (AQQQ…APRQ) and 182-223 (PGVQ…GIGT). The span at 22-44 (RAREEQERLRLEREREREQEQKR) shows a compositional bias: basic and acidic residues. 2 stretches are compositionally biased toward pro residues: residues 63–84 (EAPP…PLAT) and 102–120 (SLPP…PLAP). The segment covering 205-216 (PAEEAKSSEQKK) has biased composition (basic and acidic residues). The bHLH domain maps to 222 to 273 (GTREVHNKLEKNRRAHLKECFETLKRNIPNVDDKKTSNLSVLRTALRYIQSL). Positions 273 to 301 (LKRKEKEYEHEMERLAREKIATQQRLAEL) are leucine-zipper. The interval 321-426 (TGQPEDDQAS…PPPATPTQTL (106 aa)) is disordered. Positions 336–346 (EGEDNVDEEME) are enriched in acidic residues. Positions 374–383 (STAPAPLPTH) are enriched in pro residues. Low complexity predominate over residues 390 to 411 (PVALSPAHLPVQQQQPPQQKTP). Residues 412-421 (LPAPPPPPAT) show a composition bias toward pro residues.

In terms of assembly, efficient DNA binding requires dimerization with another bHLH protein. Binds DNA as a homodimer or a heterodimer with MAX.

It localises to the nucleus. Binds DNA as a heterodimer with MAX and represses transcription. Binds to the canonical E box sequence 5'-CACGTG-3' and, with higher affinity, to 5'-CACGCG-3'. This Mus musculus (Mouse) protein is Max-binding protein MNT (Mnt).